Consider the following 340-residue polypeptide: HTH-type transcriptional repressor PurR (340 aa).

In terms of domain architecture, HTH lacI-type spans 2–56; the sequence is ATIKDVAKLVGVSTTTVSHVINKTRFVAEDTTKAVWEAIASLNYSPSAVARSLKV. The H-T-H motif DNA-binding region spans 4-23; it reads IKDVAKLVGVSTTTVSHVIN. The DNA-binding element occupies 48 to 56; the sequence is SAVARSLKV. Hypoxanthine-binding residues include Tyr-73, Lys-188, Thr-190, Phe-219, and Asp-273.

In terms of assembly, homodimer.

It participates in purine metabolism; purine nucleotide biosynthesis [regulation]. Functionally, is the main repressor of the genes involved in the de novo synthesis of purine nucleotides, regulating purB, purC, purEK, purF, purHD, purL, purMN and guaBA expression. PurR is allosterically activated to bind its cognate DNA by binding the purine corepressors, hypoxanthine or guanine, thereby effecting transcription repression. This chain is HTH-type transcriptional repressor PurR, found in Glaesserella parasuis serovar 5 (strain SH0165) (Haemophilus parasuis).